We begin with the raw amino-acid sequence, 225 residues long: Phosphoribosylformylglycinamidine synthase subunit PurQ (225 aa).

The 221-residue stretch at 5-225 folds into the Glutamine amidotransferase type-1 domain; that stretch reads SAVITFPGSN…ESVVRGLVEA (221 aa). The Nucleophile role is filled by cysteine 89. Active-site residues include histidine 197 and glutamate 199.

In terms of assembly, part of the FGAM synthase complex composed of 1 PurL, 1 PurQ and 2 PurS subunits.

It localises to the cytoplasm. It carries out the reaction N(2)-formyl-N(1)-(5-phospho-beta-D-ribosyl)glycinamide + L-glutamine + ATP + H2O = 2-formamido-N(1)-(5-O-phospho-beta-D-ribosyl)acetamidine + L-glutamate + ADP + phosphate + H(+). The catalysed reaction is L-glutamine + H2O = L-glutamate + NH4(+). The protein operates within purine metabolism; IMP biosynthesis via de novo pathway; 5-amino-1-(5-phospho-D-ribosyl)imidazole from N(2)-formyl-N(1)-(5-phospho-D-ribosyl)glycinamide: step 1/2. Functionally, part of the phosphoribosylformylglycinamidine synthase complex involved in the purines biosynthetic pathway. Catalyzes the ATP-dependent conversion of formylglycinamide ribonucleotide (FGAR) and glutamine to yield formylglycinamidine ribonucleotide (FGAM) and glutamate. The FGAM synthase complex is composed of three subunits. PurQ produces an ammonia molecule by converting glutamine to glutamate. PurL transfers the ammonia molecule to FGAR to form FGAM in an ATP-dependent manner. PurS interacts with PurQ and PurL and is thought to assist in the transfer of the ammonia molecule from PurQ to PurL. This Novosphingobium aromaticivorans (strain ATCC 700278 / DSM 12444 / CCUG 56034 / CIP 105152 / NBRC 16084 / F199) protein is Phosphoribosylformylglycinamidine synthase subunit PurQ.